We begin with the raw amino-acid sequence, 246 residues long: Spherulin-1A (246 aa).

An N-terminal signal peptide occupies residues 1–19; sequence MKSTFLFALFVLFLAASEA. Residues 23–45 are disordered; that stretch reads YPTNPPTTPPTPAPTSTPLPSSA. The span at 25-39 shows a compositional bias: pro residues; it reads TNPPTTPPTPAPTST. A Cupin type-1 domain is found at 74–220; the sequence is FDFKNSKLGV…SLNISSIQTV (147 aa). The Mn(2+) site is built by His123, His125, Glu130, and His170. Asn213 is a glycosylation site (N-linked (GlcNAc...) asparagine).

Belongs to the germin family.

The protein resides in the secreted. It localises to the cell wall. This chain is Spherulin-1A, found in Physarum polycephalum (Slime mold).